The sequence spans 210 residues: Endo-1,4-beta-xylanase A (210 aa).

An N-terminal signal peptide occupies residues 1–19; sequence MKLKKKMLTLLLTASMSFG. Positions 20–210 constitute a GH11 domain; it reads LFGATSSAAT…SSGRSNVTVW (191 aa). Residue E104 is the Nucleophile of the active site. The Proton donor role is filled by E197.

This sequence belongs to the glycosyl hydrolase 11 (cellulase G) family.

It catalyses the reaction Endohydrolysis of (1-&gt;4)-beta-D-xylosidic linkages in xylans.. The protein operates within glycan degradation; xylan degradation. The polypeptide is Endo-1,4-beta-xylanase A (xynA) (Geobacillus stearothermophilus (Bacillus stearothermophilus)).